Here is a 239-residue protein sequence, read N- to C-terminus: Ureidoacrylate amidohydrolase RutB (239 aa).

Catalysis depends on D35, which acts as the Proton acceptor. K144 is an active-site residue. The Nucleophile role is filled by C177.

The protein belongs to the isochorismatase family. RutB subfamily.

The catalysed reaction is (Z)-3-ureidoacrylate + H2O + H(+) = (Z)-3-aminoacrylate + NH4(+) + CO2. It carries out the reaction (Z)-3-ureidoacrylate + H2O = (Z)-3-aminoacrylate + carbamate + H(+). It catalyses the reaction (Z)-2-methylureidoacrylate + H2O + H(+) = (Z)-2-methylaminoacrylate + NH4(+) + CO2. Hydrolyzes ureidoacrylate to form aminoacrylate and carbamate. The carbamate hydrolyzes spontaneously, thereby releasing one of the nitrogen atoms of the pyrimidine ring as ammonia and one of its carbon atoms as CO2. The polypeptide is Ureidoacrylate amidohydrolase RutB (Caulobacter segnis (strain ATCC 21756 / DSM 7131 / JCM 7823 / NBRC 15250 / LMG 17158 / TK0059) (Mycoplana segnis)).